Consider the following 450-residue polypeptide: Large terminase protein homolog UL15b (450 aa).

Belongs to the herpesviridae large terminase family.

The sequence is that of Large terminase protein homolog UL15b (UL15b) from Psittacid herpesvirus 1 (isolate Amazon parrot/-/97-0001/1997) (PsHV-1).